We begin with the raw amino-acid sequence, 44 residues long: uncharacterized protein (44 aa).

This is an uncharacterized protein from Saccharomyces cerevisiae (strain ATCC 204508 / S288c) (Baker's yeast).